The following is a 210-amino-acid chain: Cell division protein SepF (210 aa).

2 stretches are compositionally biased toward low complexity: residues 36 to 47 (QQQQTPAAVPTQ) and 59 to 69 (RASATTATTAS). 2 disordered regions span residues 36 to 69 (QQQQ…TTAS) and 182 to 210 (NEMS…QMIQ).

It belongs to the SepF family. Homodimer. Interacts with FtsZ.

It localises to the cytoplasm. Its function is as follows. Cell division protein that is part of the divisome complex and is recruited early to the Z-ring. Probably stimulates Z-ring formation, perhaps through the cross-linking of FtsZ protofilaments. Its function overlaps with FtsA. This chain is Cell division protein SepF, found in Trichodesmium erythraeum (strain IMS101).